The following is a 36-amino-acid chain: MTGEIFFVAGLVFVLTLVGMAIGFGVLKLRGEGKEA.

A helical membrane pass occupies residues I5 to G25.

Belongs to the PetM family. The 4 large subunits of the cytochrome b6-f complex are cytochrome b6, subunit IV (17 kDa polypeptide, PetD), cytochrome f and the Rieske protein, while the 4 small subunits are PetG, PetL, PetM and PetN. The complex functions as a dimer.

Its subcellular location is the cell inner membrane. Functionally, component of the cytochrome b6-f complex, which mediates electron transfer between photosystem II (PSII) and photosystem I (PSI), cyclic electron flow around PSI, and state transitions. This is Cytochrome b6-f complex subunit 7 from Gloeobacter violaceus (strain ATCC 29082 / PCC 7421).